A 397-amino-acid chain; its full sequence is MMSLSGSSGRTIGRPPFTPTQWEELEHQALIYKYMVSGVPVPPELIFSIRRSLDTSLVSRLLPHQSLGWGCYQMGFGRKPDPEPGRCRRTDGKKWRCSREAYPDSKYCEKHMHRGRNRARKSLDQNQTTTTPLTSPSLSFTNNNNPSPTLSSSSSSNSSSTTYSASSSSMDAYSNSNRFGLGGSSSNTRGYFNSHSLDYPYPSTSPKQQQQTLHHASALSLHQNTNSTSQFNVLASATDHKDFRYFQGIGERVGGVGERTFFPEASRSFQDSPYHHHQQPLATVMNDPYHHCSTDHNKIDHHHTYSSSSSSQHLHHDHDHRQQQCFVLGADMFNKPTRSVLANSSRQDQNQEEDEKDSSESSKKSLHHFFGEDWAQNKNSSDSWLDLSSHSRLDTGS.

In terms of domain architecture, QLQ spans 16–51; that stretch reads PFTPTQWEELEHQALIYKYMVSGVPVPPELIFSIRR. 2 short sequence motifs (bipartite nuclear localization signal) span residues 78–96 and 114–121; these read RKPDPEPGRCRRTDGKKWR and RGRNRARK. The WRC domain maps to 81–125; the sequence is DPEPGRCRRTDGKKWRCSREAYPDSKYCEKHMHRGRNRARKSLDQ. 4 disordered regions span residues 108 to 172, 197 to 217, 288 to 320, and 340 to 397; these read CEKH…SMDA, LDYPYPSTSPKQQQQTLHHAS, PYHHCSTDHNKIDHHHTYSSSSSSQHLHHDHDH, and VLAN…DTGS. Residues 111–120 show a composition bias toward basic residues; the sequence is HMHRGRNRAR. Positions 128-172 are enriched in low complexity; the sequence is TTTTPLTSPSLSFTNNNNPSPTLSSSSSSNSSSTTYSASSSSMDA. Positions 288-298 are enriched in basic and acidic residues; that stretch reads PYHHCSTDHNK.

This sequence belongs to the GRF family. As to quaternary structure, interacts with GIF1. Strongly expressed in actively growing and developing tissues, such as roots, upper stems, and shoot tips containing the shoot apical meristem (SAM) and flower buds. Also expressed in mature flowers, but weakly expressed in mature stems and leaves.

It localises to the nucleus. Transcription activator that plays a role in the regulation of cell expansion in leaf and cotyledons tissues. Acts together with GIF1 for the development of appropriate leaf size and shape through the promotion and/or maintenance of cell proliferation activity in leaf primordia. This Arabidopsis thaliana (Mouse-ear cress) protein is Growth-regulating factor 5 (GRF5).